Here is a 322-residue protein sequence, read N- to C-terminus: tRNA dimethylallyltransferase (322 aa).

18 to 25 provides a ligand contact to ATP; it reads GPTASGKS. 20-25 contributes to the substrate binding site; it reads TASGKS. 2 interaction with substrate tRNA regions span residues 43 to 46 and 167 to 171; these read DSRQ and QRLVR.

Belongs to the IPP transferase family. As to quaternary structure, monomer. It depends on Mg(2+) as a cofactor.

The enzyme catalyses adenosine(37) in tRNA + dimethylallyl diphosphate = N(6)-dimethylallyladenosine(37) in tRNA + diphosphate. Catalyzes the transfer of a dimethylallyl group onto the adenine at position 37 in tRNAs that read codons beginning with uridine, leading to the formation of N6-(dimethylallyl)adenosine (i(6)A). In Chlorobium phaeobacteroides (strain BS1), this protein is tRNA dimethylallyltransferase.